We begin with the raw amino-acid sequence, 548 residues long: MTKIENCKSCLPTENEVEEEALSGVTFLGRVFKVARCERPVFTYMSIILFLVSYIYSVSRDMKDAIIIERLDPASIPYLKVLVVLPVNICIVFSIQKILINTSVSKVFSIMCVMFGIYFCLYGTVLMSFRHIFELNEFLIRDWFADDKMVFMGLQWTIALALPVNSWTSSLMYLSAEIWGTVVFQFLFFALSNEIYTQKQSLRFIPLFLVFGNVALIVSGFSMKFIKYVSEQGSYEFTLFFRKLVFVLMGICSFVIYLIHRYFEDNIAHKPLFVTSEASYKQKTKSKIGFMEAMQTMASSRLVLAISFVVIAYSVSVNMVEASFKTCMSQYALQKGAQADFHVMGVQSDIQLAVGALSIILLLSSFPALIRDKGFLYVAFVPPIFCIFGMASVFGMAALNNSARGNRTLLGFVSIGENLWLEQLLGAIIVTGFKILKYSAVDVSKEALSMRINPAYRARFKGIYDGVCGKLGKAIGSGITNMQNVFYNSSDVRKAAISSLTIVTVITACWGFAVRYLAGKYDKSTHSNTDIDIDLINVDPMEKDADDL.

2 consecutive transmembrane segments (helical) span residues 39–59 (RPVF…YSVS) and 75–95 (SIPY…VFSI). Asn101 carries an N-linked (GlcNAc...) asparagine glycan. 8 helical membrane passes run 107–127 (VFSI…TVLM), 149–169 (MVFM…SWTS), 171–191 (LMYL…FFAL), 204–224 (FIPL…FSMK), 239–259 (LFFR…IYLI), 302–322 (LVLA…MVEA), 350–370 (IQLA…PALI), and 374–394 (GFLY…ASVF). Asn400 and Asn406 each carry an N-linked (GlcNAc...) asparagine glycan. A helical transmembrane segment spans residues 410-430 (LGFVSIGENLWLEQLLGAIIV). Asn488 is a glycosylation site (N-linked (GlcNAc...) asparagine). The helical transmembrane segment at 494-514 (KAAISSLTIVTVITACWGFAV) threads the bilayer.

This sequence belongs to the ADP/ATP translocase tlc family.

Its subcellular location is the cell membrane. ATP transporter involved in the uptake of ATP from the host cell cytoplasm. Provides the microsporidian cell with host ATP in exchange for ADP. This is an obligate exchange system. This energy acquiring activity is an important component of microsporidian parasitism. This Paranosema grylli (Microsporidian parasite) protein is ADP,ATP carrier protein 1 (ANC1).